We begin with the raw amino-acid sequence, 424 residues long: CinA-like protein (424 aa).

Belongs to the CinA family.

This Shewanella baltica (strain OS195) protein is CinA-like protein.